We begin with the raw amino-acid sequence, 1013 residues long: GPI ethanolamine phosphate transferase 3 (1013 aa).

The helical transmembrane segment at 41–61 threads the bilayer; the sequence is TLYIFLYSALAALQFIAIAFF. N-linked (GlcNAc...) asparagine glycosylation is found at N184, N205, N336, N399, and N423. 3 consecutive transmembrane segments (helical) span residues 447 to 467, 484 to 504, and 515 to 535; these read YYSI…LITI, VPTI…VFYV, and LWAS…VPIF. N539 carries N-linked (GlcNAc...) asparagine glycosylation. 4 helical membrane passes run 558–578, 582–602, 643–663, and 682–702; these read VAAF…FTIW, IVSF…VFLP, IVGG…SLIT, and NYSF…PACI. N-linked (GlcNAc...) asparagine glycosylation occurs at N707. The chain crosses the membrane as a helical span at residues 715 to 735; it reads AAPIWIGMLMKSILFVNFIYW. N742, N750, and N755 each carry an N-linked (GlcNAc...) asparagine glycan. A run of 7 helical transmembrane segments spans residues 761 to 781, 802 to 822, 825 to 845, 868 to 888, 899 to 919, 943 to 963, and 977 to 997; these read IVVG…PLCI, NAYG…ILLF, PLAQ…LEIF, FFST…GFIL, LGIV…VALL, GMLL…VTNF, and FMFA…ITIA.

The protein belongs to the PIGG/PIGN/PIGO family. PIGO subfamily.

It localises to the endoplasmic reticulum membrane. The protein operates within glycolipid biosynthesis; glycosylphosphatidylinositol-anchor biosynthesis. Its function is as follows. Involved in glycosylphosphatidylinositol-anchor biosynthesis. Transfers ethanolamine phosphate to the GPI third mannose which links the GPI-anchor to the C-terminus of the proteins by an amide bond. Involved in cell wall biosynthesis. The chain is GPI ethanolamine phosphate transferase 3 (GPI13) from Eremothecium gossypii (strain ATCC 10895 / CBS 109.51 / FGSC 9923 / NRRL Y-1056) (Yeast).